The chain runs to 124 residues: Putative C(50) carotenoid beta-cyclase subunit A (124 aa).

A run of 3 helical transmembrane segments spans residues 1 to 21, 34 to 54, and 78 to 98; these read MIGL…LVID, AAAL…VLGV, and FEEV…AAGV.

Belongs to the lycopene beta-cyclase family. As to quaternary structure, may form a complex with LbtBC.

The protein localises to the cell membrane. It participates in carotenoid biosynthesis. Involved in the biosynthesis of C(50) beta-cyclic carotenoids. May have C(50) carotenoid beta-cyclase activity and produce the C(50) beta-cyclic carotenoid C.p.450 from the C(50) carotenoid dihydrobisanhydrobacterioruberin (DH-BABR). This chain is Putative C(50) carotenoid beta-cyclase subunit A, found in Dietzia sp. (strain CQ4).